The chain runs to 119 residues: Lamprin 1.8-10 (119 aa).

The signal sequence occupies residues 1–19; the sequence is MAATMQALLVIALLHLATA. 7 consecutive repeat copies span residues 41–45, 46–50, 51–55, 56–60, 61–65, 66–70, and 86–90. Residues 41–90 are 7 X 5 AA approximate repeats; the sequence is GGLGYGGLGYGGLGYGGLGVAGLGYGGLGYPGAALGGAYTHHAALGGLGY.

In terms of assembly, the polymeric lamprin chains self-aggregate to form fibers and have secondary structures particularly rich in beta-sheets and in beta-turns.

The protein resides in the secreted. The protein localises to the extracellular space. It localises to the extracellular matrix. Self-aggregating protein that is part of the soluble form of lamprin. The protein is Lamprin 1.8-10 of Petromyzon marinus (Sea lamprey).